Here is a 126-residue protein sequence, read N- to C-terminus: Holo-[acyl-carrier-protein] synthase (126 aa).

Residues D9 and E58 each coordinate Mg(2+).

This sequence belongs to the P-Pant transferase superfamily. AcpS family. It depends on Mg(2+) as a cofactor.

The protein localises to the cytoplasm. The catalysed reaction is apo-[ACP] + CoA = holo-[ACP] + adenosine 3',5'-bisphosphate + H(+). Transfers the 4'-phosphopantetheine moiety from coenzyme A to a Ser of acyl-carrier-protein. This is Holo-[acyl-carrier-protein] synthase from Klebsiella pneumoniae subsp. pneumoniae (strain ATCC 700721 / MGH 78578).